A 586-amino-acid chain; its full sequence is Kinesin-like protein KIF25 (586 aa).

Residues 10 to 94 (SFWEQRTRQL…VIQKLNQDIQ (85 aa)) adopt a coiled-coil conformation. Residues 173 to 565 (NIRVHCRIRP…LGFGIRARQV (393 aa)) form the Kinesin motor domain. ATP is bound at residue 267 to 274 (GQTGSGKS). Disordered stretches follow at residues 417–460 (TADQ…AGRA) and 564–586 (QVQRGPARKRPPSSQMEGKRRPD).

It belongs to the TRAFAC class myosin-kinesin ATPase superfamily. Kinesin family. Homotetramer.

It is found in the cytoplasm. The protein resides in the cytoskeleton. The protein localises to the microtubule organizing center. Its subcellular location is the centrosome. Functionally, minus-end microtubule-dependent motor protein. Acts as a negative regulator of centrosome separation required to prevent premature centrosome separation during interphase. Required to maintain a centered nucleus to ensure that the spindle is stably oriented at the onset of mitosis. May also act as a negative regulator of amino acid starvation-induced autophagy. The protein is Kinesin-like protein KIF25 of Macaca fascicularis (Crab-eating macaque).